We begin with the raw amino-acid sequence, 366 residues long: MQVKDQLSSLQPYKPGKSPEQMKEVYGDHSFVKLASNENPFGCSPRVLDELQKSWLEHALYPDGGATTLRQIIADKLHVKMEQVLCGSGLDEIIQIISRAVLRAGDNIVTAGATFPQYRHHAIIEGCEVKEVALNNGVYDLEEISSVVDNDTKIVWICNPNNPTGTYVNDRKLTQFIEGISENTLIVIDEAYYEYVTAKDFPETLPLLEKHKNILVLRTFSKAYGLASFRVGYAVGQEELIEKLNVVRLPFNVSSLAQKAATIAFGDDEFIEEIVRVNTEGLQQYESFCRENDIPFYPSQTNFIFLPVENAREIYEACAHAGFIIRPFPNGIRITVGTREQNEGVISVLQQHFENKKRKSRDEENA.

Over residues 1–11 the composition is skewed to polar residues; the sequence is MQVKDQLSSLQ. The disordered stretch occupies residues 1-21; it reads MQVKDQLSSLQPYKPGKSPEQ. Lysine 222 carries the post-translational modification N6-(pyridoxal phosphate)lysine.

The protein belongs to the class-II pyridoxal-phosphate-dependent aminotransferase family. Histidinol-phosphate aminotransferase subfamily. Homodimer. Pyridoxal 5'-phosphate is required as a cofactor.

The enzyme catalyses L-histidinol phosphate + 2-oxoglutarate = 3-(imidazol-4-yl)-2-oxopropyl phosphate + L-glutamate. It functions in the pathway amino-acid biosynthesis; L-histidine biosynthesis; L-histidine from 5-phospho-alpha-D-ribose 1-diphosphate: step 7/9. The chain is Histidinol-phosphate aminotransferase 2 (hisC2) from Bacillus cereus (strain ATCC 14579 / DSM 31 / CCUG 7414 / JCM 2152 / NBRC 15305 / NCIMB 9373 / NCTC 2599 / NRRL B-3711).